The following is a 314-amino-acid chain: N-alpha-acetyltransferase 80 (314 aa).

The region spanning 90–243 (LEPVHCRPEL…TTVLRAFSKP (154 aa)) is the N-acetyltransferase domain. Substrate-binding positions include R113 and 118 to 121 (RLHS). Acetyl-CoA is bound by residues 169 to 171 (VVV), 177 to 182 (GRGFGR), and Q207. Residues 260 to 295 (VPRSSKGPPLPPPPPLPQSLTASPPPSPEPLPQSPL) form a disordered region. Residues 267 to 292 (PPLPPPPPLPQSLTASPPPSPEPLPQ) are compositionally biased toward pro residues.

Belongs to the acetyltransferase family.

The protein resides in the cytoplasm. Its subcellular location is the cytosol. The catalysed reaction is N-terminal L-aspartyl-L-aspartyl-L-aspartyl-[protein] + acetyl-CoA = N-terminal N-acetyl-L-aspartyl-L-aspartyl-L-aspartyl-[protein] + CoA + H(+). The enzyme catalyses N-terminal L-glutamyl-L-glutamyl-L-glutamyl-[protein] + acetyl-CoA = N-terminal N-acetyl-L-glutamyl-L-glutamyl-L-glutamyl-[protein] + CoA + H(+). N-alpha-acetyltransferase that specifically mediates the acetylation of the acidic amino terminus of processed forms of beta- and gamma-actin (ACTB and ACTG, respectively). N-terminal acetylation of processed beta- and gamma-actin regulates actin filament depolymerization and elongation. In vivo, preferentially displays N-terminal acetyltransferase activity towards acid N-terminal sequences starting with Asp-Asp-Asp and Glu-Glu-Glu. In vitro, shows high activity towards Met-Asp-Glu-Leu and Met-Asp-Asp-Asp. May act as a tumor suppressor. In Mus musculus (Mouse), this protein is N-alpha-acetyltransferase 80.